Here is a 270-residue protein sequence, read N- to C-terminus: Acetyl-coenzyme A carboxylase carboxyl transferase subunit beta (270 aa).

One can recognise a CoA carboxyltransferase N-terminal domain in the interval 16–270 (LFAKCPACKH…KLLAFHGGSK (255 aa)). Zn(2+)-binding residues include cysteine 20, cysteine 23, cysteine 38, and cysteine 41. The segment at 20 to 41 (CPACKHMIYQKDLGLEKICPKC) adopts a C4-type zinc-finger fold.

The protein belongs to the AccD/PCCB family. As to quaternary structure, acetyl-CoA carboxylase is a heterohexamer composed of biotin carboxyl carrier protein (AccB), biotin carboxylase (AccC) and two subunits each of ACCase subunit alpha (AccA) and ACCase subunit beta (AccD). The cofactor is Zn(2+).

It is found in the cytoplasm. It catalyses the reaction N(6)-carboxybiotinyl-L-lysyl-[protein] + acetyl-CoA = N(6)-biotinyl-L-lysyl-[protein] + malonyl-CoA. It participates in lipid metabolism; malonyl-CoA biosynthesis; malonyl-CoA from acetyl-CoA: step 1/1. In terms of biological role, component of the acetyl coenzyme A carboxylase (ACC) complex. Biotin carboxylase (BC) catalyzes the carboxylation of biotin on its carrier protein (BCCP) and then the CO(2) group is transferred by the transcarboxylase to acetyl-CoA to form malonyl-CoA. This Streptococcus mutans serotype c (strain NN2025) protein is Acetyl-coenzyme A carboxylase carboxyl transferase subunit beta.